Here is a 354-residue protein sequence, read N- to C-terminus: DNA polymerase IV (354 aa).

Residues 14 to 198 (IIHIDMDAFF…MDIAKFHGVG (185 aa)) form the UmuC domain. Residues aspartate 18 and aspartate 116 each coordinate Mg(2+). Glutamate 117 is a catalytic residue.

It belongs to the DNA polymerase type-Y family. As to quaternary structure, monomer. The cofactor is Mg(2+).

It localises to the cytoplasm. The enzyme catalyses DNA(n) + a 2'-deoxyribonucleoside 5'-triphosphate = DNA(n+1) + diphosphate. Functionally, poorly processive, error-prone DNA polymerase involved in untargeted mutagenesis. Copies undamaged DNA at stalled replication forks, which arise in vivo from mismatched or misaligned primer ends. These misaligned primers can be extended by PolIV. Exhibits no 3'-5' exonuclease (proofreading) activity. May be involved in translesional synthesis, in conjunction with the beta clamp from PolIII. The chain is DNA polymerase IV from Streptococcus sanguinis (strain SK36).